Consider the following 135-residue polypeptide: Interleukin-5 (135 aa).

A signal peptide spans 1-19 (MRVLLQLGLLALGAVCVCA). Asn48, Asn77, and Asn91 each carry an N-linked (GlcNAc...) asparagine glycan.

The protein belongs to the IL-5 family. As to quaternary structure, homodimer; disulfide-linked. Interacts with IL5RA. Interacts with CSF2RB.

The protein localises to the secreted. Functionally, homodimeric cytokine expressed predominantly by T-lymphocytes and NK cells that plays an important role in the survival, differentiation, and chemotaxis of eosinophils. Also acts on activated and resting B-cells to induce immunoglobulin production, growth, and differentiation. Mechanistically, exerts its biological effects through a receptor composed of IL5RA subunit and the cytokine receptor common subunit beta/CSF2RB. Binding to the receptor leads to activation of various kinases including LYN, SYK and JAK2 and thereby propagates signals through the RAS-MAPK and JAK-STAT5 pathways respectively. This is Interleukin-5 (IL5) from Cavia porcellus (Guinea pig).